Reading from the N-terminus, the 108-residue chain is Phosphoribosyl-AMP cyclohydrolase (108 aa).

D73 is a binding site for Mg(2+). C74 lines the Zn(2+) pocket. Positions 75 and 77 each coordinate Mg(2+). 2 residues coordinate Zn(2+): C90 and C97.

It belongs to the PRA-CH family. In terms of assembly, homodimer. Requires Mg(2+) as cofactor. Zn(2+) serves as cofactor.

It localises to the cytoplasm. It carries out the reaction 1-(5-phospho-beta-D-ribosyl)-5'-AMP + H2O = 1-(5-phospho-beta-D-ribosyl)-5-[(5-phospho-beta-D-ribosylamino)methylideneamino]imidazole-4-carboxamide. It functions in the pathway amino-acid biosynthesis; L-histidine biosynthesis; L-histidine from 5-phospho-alpha-D-ribose 1-diphosphate: step 3/9. Its function is as follows. Catalyzes the hydrolysis of the adenine ring of phosphoribosyl-AMP. The chain is Phosphoribosyl-AMP cyclohydrolase from Lactiplantibacillus plantarum (strain ATCC BAA-793 / NCIMB 8826 / WCFS1) (Lactobacillus plantarum).